The primary structure comprises 235 residues: Hydroxyacylglutathione hydrolase (235 aa).

Zn(2+)-binding residues include H53, H55, D57, H58, H109, D127, and H165.

It belongs to the metallo-beta-lactamase superfamily. Glyoxalase II family. As to quaternary structure, monomer. It depends on Zn(2+) as a cofactor.

It catalyses the reaction an S-(2-hydroxyacyl)glutathione + H2O = a 2-hydroxy carboxylate + glutathione + H(+). It functions in the pathway secondary metabolite metabolism; methylglyoxal degradation; (R)-lactate from methylglyoxal: step 2/2. In terms of biological role, thiolesterase that catalyzes the hydrolysis of S-D-lactoyl-glutathione to form glutathione and D-lactic acid. The polypeptide is Hydroxyacylglutathione hydrolase (Actinobacillus pleuropneumoniae serotype 5b (strain L20)).